The following is a 562-amino-acid chain: Probable malate:quinone oxidoreductase (562 aa).

This sequence belongs to the MQO family. Requires FAD as cofactor.

It carries out the reaction (S)-malate + a quinone = a quinol + oxaloacetate. It participates in carbohydrate metabolism; tricarboxylic acid cycle; oxaloacetate from (S)-malate (quinone route): step 1/1. This chain is Probable malate:quinone oxidoreductase, found in Stenotrophomonas maltophilia (strain K279a).